Reading from the N-terminus, the 226-residue chain is Transmembrane 4 L6 family member 20 (226 aa).

Residues 1 to 14 (MTCCEGWTSCNGFS) are Lumenal-facing. The chain crosses the membrane as a helical span at residues 15-35 (LLILILLGVVINCIPLGISLV). Topologically, residues 36–49 (EADSTSQNPISCYE) are cytoplasmic. Residues 50-70 (WWFPGIIGAGLMAIPATTMSL) form a helical membrane-spanning segment. Topologically, residues 71 to 83 (AARKRACCNNKTG) are lumenal. Residues 84 to 104 (MFLSSLFSVITVVGAVYCMLV) form a helical membrane-spanning segment. Residues 105–191 (SLQALLEGPL…RIFHFSVFMS (87 aa)) lie on the Cytoplasmic side of the membrane. Residues 192–212 (LLLVGILELLFGLSQILIGFL) traverse the membrane as a helical segment. Residues 213–226 (GCLCGVSQRRSQIV) lie on the Lumenal side of the membrane.

The protein belongs to the L6 tetraspanin family. Post-translationally, glycosylated at Asn-132, Asn-148 and Asn-163 in presence of ceramide which inverts the orientation of TM4SF20 in membranes exposing these residues to the endoplasmic reticulum lumen. In terms of processing, cleaved by signal peptidase at Ser-14 but the peptide does not act as a signal peptide. Cleavage is inhibited by ceramide which inverts the orientation of TM4SF20 in membranes exposing the N-terminus to the cytosol and not to the endoplasmic reticulum lumen.

The protein localises to the membrane. It localises to the endoplasmic reticulum membrane. Functionally, polytopic transmembrane protein. Inhibits regulated intramembrane proteolysis (RIP) of CREB3L1, inhibiting its activation and the induction of collagen synthesis. In response to ceramide, which alters TM4SF20 membrane topology, stimulates RIP activation of CREB3L1. Ceramide reverses the direction through which transmembrane helices are translocated into the endoplasmic reticulum membrane during translation of TM4SF20, this mechanism is called 'regulated alternative translocation' (RAT) and regulates the function of the transmembrane protein. This is Transmembrane 4 L6 family member 20 (Tm4sf20) from Mus musculus (Mouse).